A 192-amino-acid chain; its full sequence is Elongation factor P (192 aa).

This sequence belongs to the elongation factor P family.

Its subcellular location is the cytoplasm. It functions in the pathway protein biosynthesis; polypeptide chain elongation. Involved in peptide bond synthesis. Stimulates efficient translation and peptide-bond synthesis on native or reconstituted 70S ribosomes in vitro. Probably functions indirectly by altering the affinity of the ribosome for aminoacyl-tRNA, thus increasing their reactivity as acceptors for peptidyl transferase. The protein is Elongation factor P of Borrelia garinii subsp. bavariensis (strain ATCC BAA-2496 / DSM 23469 / PBi) (Borreliella bavariensis).